A 361-amino-acid chain; its full sequence is Probable cysteine protease RD19B (361 aa).

The signal sequence occupies residues 1 to 24 (MDYHLRVLFSVSLIFVFVSVSVCG). Positions 25–131 (DEDVLIRQVV…NQAPILPTQN (107 aa)) are cleaved as a propeptide — activation peptide. 2 disulfides stabilise this stretch: C153–C203 and C187–C237. C156 is an active-site residue. An N-linked (GlcNAc...) asparagine glycan is attached at N250. A disulfide bridge links C293 with C347. Residues H299 and N326 contribute to the active site.

The protein belongs to the peptidase C1 family.

The protein resides in the lytic vacuole. Functionally, probable thiol protease. The chain is Probable cysteine protease RD19B from Arabidopsis thaliana (Mouse-ear cress).